A 239-amino-acid chain; its full sequence is Octanoyltransferase (239 aa).

The BPL/LPL catalytic domain occupies Glu48–Val236. Substrate is bound by residues Arg87 to His94, Ala167 to Gly169, and Gly180 to Ser182. Catalysis depends on Cys198, which acts as the Acyl-thioester intermediate.

It belongs to the LipB family.

The protein localises to the cytoplasm. The enzyme catalyses octanoyl-[ACP] + L-lysyl-[protein] = N(6)-octanoyl-L-lysyl-[protein] + holo-[ACP] + H(+). It participates in protein modification; protein lipoylation via endogenous pathway; protein N(6)-(lipoyl)lysine from octanoyl-[acyl-carrier-protein]: step 1/2. Catalyzes the transfer of endogenously produced octanoic acid from octanoyl-acyl-carrier-protein onto the lipoyl domains of lipoate-dependent enzymes. Lipoyl-ACP can also act as a substrate although octanoyl-ACP is likely to be the physiological substrate. In Rhizobium etli (strain CIAT 652), this protein is Octanoyltransferase.